The following is a 239-amino-acid chain: Serine protease SplF (239 aa).

The first 36 residues, 1–36 (MNKNIIIKSIAALTILTSITGVGTTVVDGIQQTAKA), serve as a signal peptide directing secretion. Residues His-75, Asp-114, and Ser-192 each act as charge relay system in the active site.

Belongs to the peptidase S1B family.

Its subcellular location is the secreted. The protein is Serine protease SplF (splF) of Staphylococcus aureus (strain JH9).